We begin with the raw amino-acid sequence, 373 residues long: Mating-type protein A-2 (373 aa).

The disordered stretch occupies residues 1 to 22; that stretch reads MNLLNMQPKRSEQPAMFEENRA.

It to P.anserina SMR1.

Functionally, required, together with mating-type protein A-3, for efficient ascospore formation. The chain is Mating-type protein A-2 (matA-2) from Neurospora crassa (strain ATCC 24698 / 74-OR23-1A / CBS 708.71 / DSM 1257 / FGSC 987).